The sequence spans 350 residues: Enoyl-[acyl-carrier-protein] reductase, mitochondrial (350 aa).

The transit peptide at 1–12 directs the protein to the mitochondrion; it reads MWLGLRLFHRPF. Residue Tyr-68 is the Proton donor of the active site. NADP(+) contacts are provided by residues Asn-141, 167 to 170, 190 to 192, 259 to 262, 284 to 286, and Lys-345; these read NSGV, RDR, YGGM, and FWV.

Belongs to the zinc-containing alcohol dehydrogenase family. Quinone oxidoreductase subfamily. Homodimer. Expressed in the developing pronephros.

It is found in the mitochondrion. The enzyme catalyses a 2,3-saturated acyl-[ACP] + NADP(+) = a (2E)-enoyl-[ACP] + NADPH + H(+). Catalyzes the NADPH-dependent reduction of trans-2-enoyl thioesters in mitochondrial fatty acid synthesis (fatty acid synthesis type II). Fatty acid chain elongation in mitochondria uses acyl carrier protein (ACP) as an acyl group carrier, but the enzyme accepts both ACP and CoA thioesters as substrates in vitro. May provide the octanoyl chain used for lipoic acid biosynthesis, regulating protein lipoylation and mitochondrial respiratory activity. Involved in iron homeostasis; affecting Fe-S cluster assembly and ceramide metabolism. Required for proper morphology and bioenergetic functions of mitochondria. Required for maintenance of neurons. Functions in pronephros development, regulating late differentiation of all pronephric tubule segments. The polypeptide is Enoyl-[acyl-carrier-protein] reductase, mitochondrial (mecr) (Xenopus tropicalis (Western clawed frog)).